The chain runs to 705 residues: Effector protein hopD1 (705 aa).

2 stretches are compositionally biased toward polar residues: residues 1–11 and 28–41; these read MNPLRSIQHNI and QAQQ…SPSQ. Disordered stretches follow at residues 1–41 and 173–207; these read MNPL…SPSQ and SSSL…DSGS. Over residues 173-184 the composition is skewed to low complexity; the sequence is SSSLETPLLSSP.

It localises to the secreted. In terms of biological role, effector protein involved in non-host recognition. The polypeptide is Effector protein hopD1 (hopD1) (Pseudomonas syringae pv. tomato (strain ATCC BAA-871 / DC3000)).